A 175-amino-acid chain; its full sequence is Gamma-crystallin B (175 aa).

2 Beta/gamma crystallin 'Greek key' domains span residues 2-40 (GKIT…RVDS) and 41-83 (GCWM…RLIP). The segment at 84–88 (QHSGT) is connecting peptide. Beta/gamma crystallin 'Greek key' domains follow at residues 89–129 (YRMR…NVME) and 130–172 (GCWV…RRVM).

Belongs to the beta/gamma-crystallin family.

Crystallins are the dominant structural components of the vertebrate eye lens. The polypeptide is Gamma-crystallin B (Crygb) (Rattus norvegicus (Rat)).